The primary structure comprises 201 residues: Large ribosomal subunit protein bL25 (201 aa).

Belongs to the bacterial ribosomal protein bL25 family. CTC subfamily. In terms of assembly, part of the 50S ribosomal subunit; part of the 5S rRNA/L5/L18/L25 subcomplex. Contacts the 5S rRNA. Binds to the 5S rRNA independently of L5 and L18.

In terms of biological role, this is one of the proteins that binds to the 5S RNA in the ribosome where it forms part of the central protuberance. This is Large ribosomal subunit protein bL25 from Burkholderia cenocepacia (strain HI2424).